The chain runs to 762 residues: 1-phosphatidylinositol 4,5-bisphosphate phosphodiesterase delta-4 (762 aa).

In terms of domain architecture, PH spans 16–124 (LLMQEGMPMR…WMRGLQLLVD (109 aa)). Residues 26-53 (KVRSKSWKKLRYFRLQNDGMTVWHARQA) are substrate binding. EF-hand domains follow at residues 134-169 (RLDQ…MNVE), 170-205 (MDQE…LTKR), and 206-237 (AEVQ…EQKE). The Ca(2+) site is built by aspartate 147, asparagine 149, aspartate 151, lysine 153, glutamate 158, aspartate 183, serine 185, serine 187, threonine 189, and glutamate 194. The GBA motif lies at 213 to 243 (ESFSADGQKLTLLEFLDFLQEEQKERDCTSE). Residues 290 to 435 (QDMTQPLNHY…LRRKILVKGK (146 aa)) form the PI-PLC X-box domain. Histidine 305 is a catalytic residue. Residues asparagine 306, glutamate 335, and aspartate 337 each contribute to the Ca(2+) site. Residue histidine 350 is part of the active site. Glutamate 384 is a binding site for Ca(2+). Positions 433 and 435 each coordinate substrate. The span at 443–471 (LEYEEEEAEPELEESELALESQFETEPEP) shows a compositional bias: acidic residues. The interval 443–483 (LEYEEEEAEPELEESELALESQFETEPEPQEQNLQNKDKKK) is disordered. At serine 457 the chain carries Phosphoserine. A PI-PLC Y-box domain is found at 493 to 609 (LSSLVIYLKS…GYVLKPDFLR (117 aa)). Positions 522 and 549 each coordinate substrate. In terms of domain architecture, C2 spans 609–736 (RDIQSSFHPE…QGYRHIHLLS (128 aa)). Residues isoleucine 650, aspartate 652, asparagine 676, aspartate 705, tyrosine 706, and aspartate 707 each contribute to the Ca(2+) site. The PDZ-binding motif lies at 731–734 (HIHL).

In terms of assembly, interacts with GRIP1. As to quaternary structure, interacts (via GBA motif) with guanine nucleotide-binding protein G(i) alpha subunit GNAI3 (inactive GDP-bound form); high-affinity interaction. Interacts (via GBA motif) with guanine nucleotide-binding protein G(i) alpha subunit GNAI3 (inactive GDP-bound form); low-affinity interaction. Requires Ca(2+) as cofactor. Highly expressed in skeletal muscle and kidney tissues, and at moderate level in intestinal tissue. Expressed in corneal epithelial cells.

It is found in the membrane. The protein resides in the nucleus. The protein localises to the cytoplasm. Its subcellular location is the endoplasmic reticulum. The catalysed reaction is a 1,2-diacyl-sn-glycero-3-phospho-(1D-myo-inositol-4,5-bisphosphate) + H2O = 1D-myo-inositol 1,4,5-trisphosphate + a 1,2-diacyl-sn-glycerol + H(+). It carries out the reaction a 1,2-diacyl-sn-glycero-3-phospho-(1D-myo-inositol) + H2O = 1D-myo-inositol 1-phosphate + a 1,2-diacyl-sn-glycerol + H(+). Functionally, hydrolyzes the phosphatidylinositol 4,5-bisphosphate (PIP2) to generate 2 second messenger molecules diacylglycerol (DAG) and inositol 1,4,5-trisphosphate (IP3). DAG mediates the activation of protein kinase C (PKC), while IP3 releases Ca(2+) from intracellular stores. Required for acrosome reaction in sperm during fertilization, probably by acting as an important enzyme for intracellular Ca(2+) mobilization in the zona pellucida-induced acrosome reaction. May play a role in cell growth. Modulates the liver regeneration in cooperation with nuclear PKC. Overexpression up-regulates the Erk signaling pathway and proliferation. Acts as a non-receptor guanine nucleotide exchange factor which binds to and activates guanine nucleotide-binding protein (G-protein) alpha subunit GNAI3. In Homo sapiens (Human), this protein is 1-phosphatidylinositol 4,5-bisphosphate phosphodiesterase delta-4.